A 311-amino-acid polypeptide reads, in one-letter code: Ribonuclease HIII (311 aa).

An RNase H type-2 domain is found at Leu93–His310. Residues Asp99, Glu100, and Asp204 each coordinate a divalent metal cation.

This sequence belongs to the RNase HII family. RnhC subfamily. The cofactor is Mn(2+). Mg(2+) is required as a cofactor.

It is found in the cytoplasm. The catalysed reaction is Endonucleolytic cleavage to 5'-phosphomonoester.. Endonuclease that specifically degrades the RNA of RNA-DNA hybrids. In Geobacillus kaustophilus (strain HTA426), this protein is Ribonuclease HIII.